The following is an 803-amino-acid chain: Leucine--tRNA ligase (803 aa).

The 'HIGH' region signature appears at 40 to 51 (PYPSGAGLHVGH). The 'KMSKS' region motif lies at 575–579 (KMSKS). K578 lines the ATP pocket.

It belongs to the class-I aminoacyl-tRNA synthetase family.

It localises to the cytoplasm. The catalysed reaction is tRNA(Leu) + L-leucine + ATP = L-leucyl-tRNA(Leu) + AMP + diphosphate. The polypeptide is Leucine--tRNA ligase (Listeria monocytogenes serotype 4b (strain F2365)).